The chain runs to 314 residues: Mitochondrial 2-oxoglutarate/malate carrier protein (314 aa).

A2 carries the post-translational modification N-acetylalanine. Position 6 is a phosphoserine (S6). Solcar repeat units follow at residues 23–108 (VKFL…LFER), 117–208 (PGFL…SKQF), and 217–306 (DNIL…MNKA). A helical membrane pass occupies residues 24–42 (KFLFGGLAGMGATVFVQPL). K57 bears the N6-succinyllysine mark. K73 is subject to N6-acetyllysine. Residues 83 to 101 (GLSAGLLRQATYTTTRLGI) traverse the membrane as a helical segment. Y102 carries the post-translational modification Phosphotyrosine. Transmembrane regions (helical) follow at residues 119-140 (FLLK…GTPA), 183-202 (GCIP…LASY), and 222-240 (HFCA…SMPV). Residue K256 is modified to N6-acetyllysine. A helical membrane pass occupies residues 281-300 (GFTPYYARLGPHTVLTFIFL).

It belongs to the mitochondrial carrier (TC 2.A.29) family. Interacts with SMIM26.

Its subcellular location is the mitochondrion inner membrane. The catalysed reaction is (S)-malate(in) + 2-oxoglutarate(out) = (S)-malate(out) + 2-oxoglutarate(in). It catalyses the reaction malonate(in) + 2-oxoglutarate(out) = malonate(out) + 2-oxoglutarate(in). It carries out the reaction succinate(in) + 2-oxoglutarate(out) = succinate(out) + 2-oxoglutarate(in). The enzyme catalyses maleate(in) + 2-oxoglutarate(out) = maleate(out) + 2-oxoglutarate(in). The catalysed reaction is oxaloacetate(in) + 2-oxoglutarate(out) = oxaloacetate(out) + 2-oxoglutarate(in). Functionally, catalyzes the transport of 2-oxoglutarate (alpha-oxoglutarate) across the inner mitochondrial membrane in an electroneutral exchange for malate. Can also exchange 2-oxoglutarate for other dicarboxylic acids such as malonate, succinate, maleate and oxaloacetate, although with lower affinity. Contributes to several metabolic processes, including the malate-aspartate shuttle, the oxoglutarate/isocitrate shuttle, in gluconeogenesis from lactate, and in nitrogen metabolism. Maintains mitochondrial fusion and fission events, and the organization and morphology of cristae. Involved in the regulation of apoptosis. Helps protect from cytotoxic-induced apoptosis by modulating glutathione levels in mitochondria. This Mus musculus (Mouse) protein is Mitochondrial 2-oxoglutarate/malate carrier protein (Slc25a11).